The primary structure comprises 155 residues: 3-hydroxyacyl-[acyl-carrier-protein] dehydratase FabZ (155 aa).

His59 is a catalytic residue.

This sequence belongs to the thioester dehydratase family. FabZ subfamily.

It localises to the cytoplasm. It carries out the reaction a (3R)-hydroxyacyl-[ACP] = a (2E)-enoyl-[ACP] + H2O. Involved in unsaturated fatty acids biosynthesis. Catalyzes the dehydration of short chain beta-hydroxyacyl-ACPs and long chain saturated and unsaturated beta-hydroxyacyl-ACPs. The protein is 3-hydroxyacyl-[acyl-carrier-protein] dehydratase FabZ of Bartonella quintana (strain Toulouse) (Rochalimaea quintana).